A 182-amino-acid polypeptide reads, in one-letter code: MINSMQFLYLVASYLFGNILTAYIVTKWRHNVDIRDEGSGNPGARNMGRVYGKGYFVATFLGDAIKGAIVVSIAKYLFEDSTFLMLTLLAVIMGHIYPILFKGKGGKGISTFIGGLIAFDYLIALTLVTVFIIFYLIFKGFTKPGLITIACLPLCMILYSYSIVTTILSVLIIVLILYVNRE.

The next 5 membrane-spanning stretches (helical) occupy residues 5-25 (MQFL…AYIV), 54-74 (GYFV…VSIA), 81-101 (STFL…PILF), 117-137 (IAFD…FYLI), and 157-177 (ILYS…VLIL).

It belongs to the PlsY family. Probably interacts with PlsX.

It localises to the cell membrane. The catalysed reaction is an acyl phosphate + sn-glycerol 3-phosphate = a 1-acyl-sn-glycero-3-phosphate + phosphate. The protein operates within lipid metabolism; phospholipid metabolism. Functionally, catalyzes the transfer of an acyl group from acyl-phosphate (acyl-PO(4)) to glycerol-3-phosphate (G3P) to form lysophosphatidic acid (LPA). This enzyme utilizes acyl-phosphate as fatty acyl donor, but not acyl-CoA or acyl-ACP. The chain is Glycerol-3-phosphate acyltransferase 1 from Bacillus thuringiensis subsp. konkukian (strain 97-27).